The primary structure comprises 598 residues: MRSHYCGDVNKSHVGQEVTLVGWVNRSRDLGGVVFLDLRDREGIVQVVYDPDLPEVFDVASTLRSEFCVQIKGLVRARPDSQINADMRTGEVEILGLELTILNSSAPLPINMDKNQHNTEEQRLKYRYLDLRRPEMADRIVFRSKVTSAVRRFLDGNGFLDIETPILTKATPEGARDYLVPSRTYKGQFFALPQSPQLFKQLLMMSGFDRYYQIVKCFRDEDLRADRQPEFTQIDIETSFMSSDQVMAKTEEMVRGLFQELLNVDLGEFPKMTFEEAMRRFGSDKPDLRNPLELIDVADIVKEVEFAVFNGPANDPEGRVAVLSIPGGAKLSRKQLDEYAKYVTIYGAKGLAWMKVNDLDKGMEGIQSPVLKFLSEDVVKALLERTGAQTGDLILFGADKANIVAESMGALRLKAGEDFDLLQGEWKPLWVVDFPMFERTSDGGLHAMHHPFTAPSNMTPEELEANPIAAISDAYDMVLNGCELGGGSVRIHDSKMQSAVFRILGINDEEATEKFGFLLEALRYGTPPHAGLAFGLDRIIMLMTGASSIRDVMAFPKTTTAACPLTNAPGFANPVQLAELGVSVVEAETKDSETKDAE.

Position 173 (glutamate 173) interacts with L-aspartate. The interval glutamine 197–lysine 200 is aspartate. Position 219 (arginine 219) interacts with L-aspartate. Residues arginine 219 to glutamate 221 and glutamine 228 contribute to the ATP site. Histidine 449 contacts L-aspartate. ATP is bound at residue glutamate 483. Arginine 490 serves as a coordination point for L-aspartate. Glycine 535–arginine 538 serves as a coordination point for ATP.

The protein belongs to the class-II aminoacyl-tRNA synthetase family. Type 1 subfamily. Homodimer.

The protein resides in the cytoplasm. It carries out the reaction tRNA(Asp) + L-aspartate + ATP = L-aspartyl-tRNA(Asp) + AMP + diphosphate. Catalyzes the attachment of L-aspartate to tRNA(Asp) in a two-step reaction: L-aspartate is first activated by ATP to form Asp-AMP and then transferred to the acceptor end of tRNA(Asp). This is Aspartate--tRNA ligase from Shewanella halifaxensis (strain HAW-EB4).